A 145-amino-acid polypeptide reads, in one-letter code: VPCQIFQDDTKTLIKTIVTRINDISHTSVSAKQSVTGLDFIPGLHPILSLSKMDQTLAVYQQVLTSLPSQNVLQIANDLENLRDLLHLLAFSKSCSLPQTSGLHKPESLDGVLEALLYSTEVVALSRLQGSLQDILQQLDISPEC.

A disulfide bridge links cysteine 95 with cysteine 145.

Belongs to the leptin family.

Its subcellular location is the secreted. Its function is as follows. Key player in the regulation of energy balance and body weight control. Once released into the circulation, has central and peripheral effects by binding LEPR, found in many tissues, which results in the activation of several major signaling pathways. The chain is Leptin (LEP) from Meleagris gallopavo (Wild turkey).